The sequence spans 238 residues: MASSTGLTVAGALLAGDFRLPAVSSLIPRKTSSSLSCLSNRDLSSPYNCCWRLSRGKILTSLSNSRKFAVGKEAEDGFLSNVSEDTDEMFDDLFNKYGKVVFRSTDVKSPTAEVDDDAESLAFAVELAKVASDVKAGDIKVLFVKPLVYWTRFFIIATAFSRPQIDAIGSRMRDLAEKKYGKVANGDVKPNSWTLLDFGDVVIHLFLPPQRTFYNLEDFYGNAMQIELPFEDQSQPRN.

The transit peptide at 1–66 (MASSTGLTVA…KILTSLSNSR (66 aa)) directs the protein to the chloroplast.

Belongs to the Iojap/RsfS family. Interacts with chloroplast ribosomal protein uL14c (rpl14).

It is found in the plastid. Its subcellular location is the chloroplast. In terms of biological role, may be a ribosome silencing factor (Potential). Involved in plastid biogenesis. In Arabidopsis thaliana (Mouse-ear cress), this protein is Protein Iojap, chloroplastic (IJ).